A 200-amino-acid chain; its full sequence is MAASQQQASAASSAAGVSGPSSAGGPGPQQQPQPPAQLVGPAQSGLLQQQQQDFDPVQRYKMLIPQLKESLQTLMKVAAQNLIQNTNIDNGQKSSDGPIQRFDKCLEEFYALCDQLELCLRLAHECLSQSCDSAKHSPTLVPTATKPDAVQPDSLPYPQYLAVIKAQISCAKDIHTALLDCANKVTGKTPAPPAGPGGTL.

2 stretches are compositionally biased toward low complexity: residues 1–21 (MAAS…SGPS) and 36–48 (AQLV…GLLQ). Positions 1–48 (MAASQQQASAASSAAGVSGPSSAGGPGPQQQPQPPAQLVGPAQSGLLQ) are disordered. Ala2 is subject to N-acetylalanine.

It belongs to the Mediator complex subunit 29 family. In terms of assembly, component of the Mediator complex, which is composed of MED1, MED4, MED6, MED7, MED8, MED9, MED10, MED11, MED12, MED13, MED13L, MED14, MED15, MED16, MED17, MED18, MED19, MED20, MED21, MED22, MED23, MED24, MED25, MED26, MED27, MED29, MED30, MED31, CCNC, CDK8 and CDC2L6/CDK11. The MED12, MED13, CCNC and CDK8 subunits form a distinct module termed the CDK8 module. Mediator containing the CDK8 module is less active than Mediator lacking this module in supporting transcriptional activation. Individual preparations of the Mediator complex lacking one or more distinct subunits have been variously termed ARC, CRSP, DRIP, PC2, SMCC and TRAP. Associates with the MED18/MED20 heteromer.

The protein resides in the nucleus. Functionally, component of the Mediator complex, a coactivator involved in the regulated transcription of nearly all RNA polymerase II-dependent genes. Mediator functions as a bridge to convey information from gene-specific regulatory proteins to the basal RNA polymerase II transcription machinery. Mediator is recruited to promoters by direct interactions with regulatory proteins and serves as a scaffold for the assembly of a functional preinitiation complex with RNA polymerase II and the general transcription factors. In Pongo abelii (Sumatran orangutan), this protein is Mediator of RNA polymerase II transcription subunit 29 (MED29).